A 473-amino-acid chain; its full sequence is METPTPLPPVPASPTCNPAPRTIQIEFPQHSSSLLESLNRHRLEGKFCDVSLLVQGRELRAHKAVLAAASPYFHDKLLLGDAPRLTLPSVIEADAFEGLLQLIYSGRLRLPLDALPAHLLVASGLQMWQVVDQCSEILRELETSGGGISARGGNSYHALLSTTSSTGGWCIRSSPFQTPVQSSASTESPASTESPVGGEGSELGEVLQIQVEEEEEEEEDDDDEDQGSATLSQTPQPQRVSGVFPRPHGPHPLPMTATPRKLPEGESAPLELPAPPALPPKIFYIKQEPFEPKEEISGSGTQPGGAKEETKVFSGGDTEGNGELGFLLPSGPGPTSGGGGPSWKPVDLHGNEILSGGGGPGGAGQAVHGPVKLGGTPPADGKRFGCLCGKRFAVKPKRDRHIMLTFSLRPFGCGICNKRFKLKHHLTEHMKTHAGALHACPHCGRRFRVHACFLRHRDLCKGQGWATAHWTYK.

The BTB domain occupies 48–112; that stretch reads CDVSLLVQGR…IYSGRLRLPL (65 aa). The segment at 177–279 is disordered; sequence QTPVQSSAST…LELPAPPALP (103 aa). Residues 182-196 show a composition bias toward low complexity; sequence SSASTESPASTESPV. Acidic residues predominate over residues 211–226; that stretch reads VEEEEEEEEDDDDEDQ. The span at 227–239 shows a compositional bias: polar residues; it reads GSATLSQTPQPQR. Residue Lys-286 forms a Glycyl lysine isopeptide (Lys-Gly) (interchain with G-Cter in SUMO1); alternate linkage. Lys-286 is covalently cross-linked (Glycyl lysine isopeptide (Lys-Gly) (interchain with G-Cter in SUMO2); alternate). Glycyl lysine isopeptide (Lys-Gly) (interchain with G-Cter in SUMO2) cross-links involve residues Lys-293 and Lys-307. The segment at 293-376 is disordered; that stretch reads KEEISGSGTQ…VHGPVKLGGT (84 aa). Positions 355-364 are enriched in gly residues; the sequence is SGGGGPGGAG. Lys-382 is covalently cross-linked (Glycyl lysine isopeptide (Lys-Gly) (interchain with G-Cter in SUMO2)). A C2H2-type 1 zinc finger spans residues 411 to 433; that stretch reads FGCGICNKRFKLKHHLTEHMKTH. The segment at 438–460 adopts a C2H2-type 2; atypical zinc-finger fold; that stretch reads HACPHCGRRFRVHACFLRHRDLC.

The protein resides in the nucleus. In terms of biological role, may be involved in transcriptional regulation. The polypeptide is Zinc finger and BTB domain-containing protein 9 (ZBTB9) (Homo sapiens (Human)).